The chain runs to 302 residues: Protein FdhE homolog (302 aa).

The protein belongs to the FdhE family.

It localises to the cytoplasm. Necessary for formate dehydrogenase activity. In Haemophilus influenzae (strain PittEE), this protein is Protein FdhE homolog.